Consider the following 424-residue polypeptide: Histidine--tRNA ligase (424 aa).

It belongs to the class-II aminoacyl-tRNA synthetase family. In terms of assembly, homodimer.

The protein resides in the cytoplasm. The enzyme catalyses tRNA(His) + L-histidine + ATP = L-histidyl-tRNA(His) + AMP + diphosphate + H(+). The sequence is that of Histidine--tRNA ligase from Shewanella woodyi (strain ATCC 51908 / MS32).